The chain runs to 205 residues: Recombination protein RecR (205 aa).

A C4-type zinc finger spans residues 58–73 (CKKCHTISDHELCAIC). The 97-residue stretch at 81–177 (RVVCIVEDIR…KISTIARGIP (97 aa)) folds into the Toprim domain.

The protein belongs to the RecR family.

In terms of biological role, may play a role in DNA repair. It seems to be involved in an RecBC-independent recombinational process of DNA repair. It may act with RecF and RecO. The sequence is that of Recombination protein RecR from Cytophaga hutchinsonii (strain ATCC 33406 / DSM 1761 / CIP 103989 / NBRC 15051 / NCIMB 9469 / D465).